The primary structure comprises 1315 residues: DNA-directed RNA polymerase subunit beta' (1315 aa).

Residues cysteine 60, cysteine 62, cysteine 75, and cysteine 78 each coordinate Zn(2+). Mg(2+) contacts are provided by aspartate 535, aspartate 537, and aspartate 539. Cysteine 890, cysteine 967, cysteine 974, and cysteine 977 together coordinate Zn(2+).

It belongs to the RNA polymerase beta' chain family. As to quaternary structure, the RNAP catalytic core consists of 2 alpha, 1 beta, 1 beta' and 1 omega subunit. When a sigma factor is associated with the core the holoenzyme is formed, which can initiate transcription. The cofactor is Mg(2+). It depends on Zn(2+) as a cofactor.

It carries out the reaction RNA(n) + a ribonucleoside 5'-triphosphate = RNA(n+1) + diphosphate. In terms of biological role, DNA-dependent RNA polymerase catalyzes the transcription of DNA into RNA using the four ribonucleoside triphosphates as substrates. The protein is DNA-directed RNA polymerase subunit beta' of Mycobacterium sp. (strain MCS).